A 121-amino-acid polypeptide reads, in one-letter code: Histone H2B (121 aa).

Residues 1–27 form a disordered region; sequence MAPKKAPAAAEKKVKKAPTTEKKNKKK. A2 bears the N,N,N-trimethylalanine mark. Residues K5 and K41 each carry the N6-acetyllysine modification. K115 participates in a covalent cross-link: Glycyl lysine isopeptide (Lys-Gly) (interchain with G-Cter in ubiquitin).

It belongs to the histone H2B family. As to quaternary structure, the nucleosome is a histone octamer containing two molecules each of H2A, H2B, H3 and H4 assembled in one H3-H4 heterotetramer and two H2A-H2B heterodimers. The octamer wraps approximately 147 bp of DNA. In terms of processing, monoubiquitination of Lys-115 gives a specific tag for epigenetic transcriptional activation and is also prerequisite for histone H3 'Lys-4' and 'Lys-79' methylation. Post-translationally, acetylation occurs almost exclusively in the MAC.

The protein resides in the nucleus. Its subcellular location is the chromosome. Its function is as follows. Core component of nucleosome. Nucleosomes wrap and compact DNA into chromatin, limiting DNA accessibility to the cellular machineries which require DNA as a template. Histones thereby play a central role in transcription regulation, DNA repair, DNA replication and chromosomal stability. DNA accessibility is regulated via a complex set of post-translational modifications of histones, also called histone code, and nucleosome remodeling. The polypeptide is Histone H2B (Tetrahymena pyriformis).